The chain runs to 459 residues: Probable ECA polymerase (459 aa).

11 helical membrane-spanning segments follow: residues 3 to 23 (LTQFGGLFVVYLISLVFILTL), 37 to 57 (IFFSLLYLLTFYFGFPLTCLL), 65 to 85 (VVPVDALLHALLASTCFYGIY), 119 to 139 (LASVAVVTVGLFFMQNGFLLF), 154 to 174 (GVALKRFFYFFIPAMLVVYFL), 181 to 201 (WLFFLISTVAFGILTYVVVGG), 206 to 226 (IIIAFALFLFIGIVRGWITLW), 227 to 247 (MLVTAGAIGIVGMFWLALKRY), 340 to 360 (LVVMGGVLFIPVGAIVVGLII), 377 to 397 (YKAAILQAFCFGAIFNMIVLA), and 409 to 429 (VFFCIIFGLCLVIAKLLYWLF).

Belongs to the WzyE family. As to quaternary structure, probably part of a complex composed of WzxE, WzyE and WzzE.

The protein resides in the cell inner membrane. The protein operates within bacterial outer membrane biogenesis; enterobacterial common antigen biosynthesis. Probably involved in the polymerization of enterobacterial common antigen (ECA) trisaccharide repeat units. The polypeptide is Probable ECA polymerase (Photorhabdus laumondii subsp. laumondii (strain DSM 15139 / CIP 105565 / TT01) (Photorhabdus luminescens subsp. laumondii)).